Here is a 296-residue protein sequence, read N- to C-terminus: Phosphatidylglycerol--prolipoprotein diacylglyceryl transferase (296 aa).

4 consecutive transmembrane segments (helical) span residues 10–30, 57–77, 92–112, and 119–139; these read IAFS…LAAF, LLFY…MLFY, VWEG…ACGL, and LHFF…LGFG. Arginine 140 lines the a 1,2-diacyl-sn-glycero-3-phospho-(1'-sn-glycerol) pocket. 3 helical membrane passes run 194-214, 220-240, and 255-275; these read QLYE…TFSM, YAVS…VEFV, and LTMG…LLAL.

The protein belongs to the Lgt family.

It localises to the cell inner membrane. The catalysed reaction is L-cysteinyl-[prolipoprotein] + a 1,2-diacyl-sn-glycero-3-phospho-(1'-sn-glycerol) = an S-1,2-diacyl-sn-glyceryl-L-cysteinyl-[prolipoprotein] + sn-glycerol 1-phosphate + H(+). Its pathway is protein modification; lipoprotein biosynthesis (diacylglyceryl transfer). Catalyzes the transfer of the diacylglyceryl group from phosphatidylglycerol to the sulfhydryl group of the N-terminal cysteine of a prolipoprotein, the first step in the formation of mature lipoproteins. The chain is Phosphatidylglycerol--prolipoprotein diacylglyceryl transferase from Xanthomonas campestris pv. campestris (strain 8004).